The chain runs to 341 residues: Putative NADPH-dependent methylglyoxal reductase GRP2 (341 aa).

Residues K40 and Y171 each contribute to the NADP(+) site.

It belongs to the NAD(P)-dependent epimerase/dehydratase family. Dihydroflavonol-4-reductase subfamily.

Its subcellular location is the cytoplasm. The catalysed reaction is (S)-lactaldehyde + NADP(+) = methylglyoxal + NADPH + H(+). Functionally, catalyzes the irreversible reduction of the cytotoxic compound methylglyoxal (MG, 2-oxopropanal) to (S)-lactaldehyde. MG is synthesized via a bypath of glycolysis from dihydroxyacetone phosphate and is believed to play a role in cell cycle regulation and stress adaptation. The sequence is that of Putative NADPH-dependent methylglyoxal reductase GRP2 (GRP2) from Candida albicans (strain SC5314 / ATCC MYA-2876) (Yeast).